Consider the following 725-residue polypeptide: Glutamine-dependent NAD(+) synthetase (725 aa).

Residues 4–274 (LKVATCNLNQ…VEVIISQVDL (271 aa)) form the CN hydrolase domain. Glutamate 44 acts as the Proton acceptor; for glutaminase activity in catalysis. Lysine 113 serves as the catalytic For glutaminase activity. The active-site Nucleophile; for glutaminase activity is cysteine 174. Residues 324-709 (YHSPQEEIAF…FPEEEANSNK (386 aa)) are ligase. 354–361 (PLSGGADS) is an ATP binding site. Serine 356 is an active-site residue.

In the C-terminal section; belongs to the NAD synthetase family.

The enzyme catalyses deamido-NAD(+) + L-glutamine + ATP + H2O = L-glutamate + AMP + diphosphate + NAD(+) + H(+). It participates in cofactor biosynthesis; NAD(+) biosynthesis; NAD(+) from deamido-NAD(+) (L-Gln route): step 1/1. This Arabidopsis thaliana (Mouse-ear cress) protein is Glutamine-dependent NAD(+) synthetase.